We begin with the raw amino-acid sequence, 511 residues long: Maturase K (511 aa).

The protein belongs to the intron maturase 2 family. MatK subfamily.

It localises to the plastid. The protein localises to the chloroplast. Its function is as follows. Usually encoded in the trnK tRNA gene intron. Probably assists in splicing its own and other chloroplast group II introns. The sequence is that of Maturase K from Nandina domestica (Heavenly bamboo).